The sequence spans 99 residues: MGYKGKWNERNKNPYVNEKILKKIIKMNETGERKIIKVWDRSCTITQEMVGHTIAVYNGQKFIPVYIQPEMVGHKLGEFSLTRTFRGHPDKSAKVVKKK.

It belongs to the universal ribosomal protein uS19 family.

Protein S19 forms a complex with S13 that binds strongly to the 16S ribosomal RNA. The sequence is that of Small ribosomal subunit protein uS19 from Sulfurihydrogenibium sp. (strain YO3AOP1).